Consider the following 116-residue polypeptide: MTNKIIQQLEAEQMSKEIPTFAPGDTVVVQVKVKEGERSRLQAFEGVVIAKRNRGLNSAFTVRKISSGVGVERTFQTYSPQIDSLAVKRRGDVRKAKLYYLRDLSGKAARIKEKLS.

Belongs to the bacterial ribosomal protein bL19 family.

Its function is as follows. This protein is located at the 30S-50S ribosomal subunit interface and may play a role in the structure and function of the aminoacyl-tRNA binding site. The protein is Large ribosomal subunit protein bL19 of Pseudomonas putida (strain ATCC 700007 / DSM 6899 / JCM 31910 / BCRC 17059 / LMG 24140 / F1).